The sequence spans 427 residues: MESLTLQPIARVDGAINLPGSKSVSNRALLLAALACGKTVLMNLLDSDDVRHMLNALSALGINYTLSADRTRCDITGNGGALHAPGALELFLGNAGTAMRPLAAALCLGQNEIVLTGEPRMKERPIGHLVDSLRQGGANIDYLEQENYPPLRLRGGFTGGDIEVDGSVSSQFLTALLMTAPLAPEDTIIRVKGELVSKPYIDITLNLMKTFGVEIANHHYQQFVVKGGQKYHSPGRYLVEGDASSASYFLAAGAIKGGTVKVTGIGRKSMQGDIRFADVLEKMGATITWGDDFIACTRGELHAIDMDMNHIPDAAMTIATTALFAKGTTTLRNIYNWRVKETDRLFAMATELRKVGAEVEEGHDYIRITPPAKLQHADIGTYNDHRMAMCFSLVALSDTPVTILDPKCTAKTFPDYFEQLARMSTPA.

3-phosphoshikimate is bound by residues Lys22, Ser23, and Arg27. Phosphoenolpyruvate is bound at residue Lys22. 2 residues coordinate phosphoenolpyruvate: Gly96 and Arg124. 3-phosphoshikimate contacts are provided by Ser169, Ser170, Gln171, Ser197, Asp313, Asn336, and Lys340. Gln171 contributes to the phosphoenolpyruvate binding site. Asp313 serves as the catalytic Proton acceptor. Phosphoenolpyruvate contacts are provided by Arg344, Arg386, and Lys411.

It belongs to the EPSP synthase family. Monomer.

It is found in the cytoplasm. The catalysed reaction is 3-phosphoshikimate + phosphoenolpyruvate = 5-O-(1-carboxyvinyl)-3-phosphoshikimate + phosphate. It participates in metabolic intermediate biosynthesis; chorismate biosynthesis; chorismate from D-erythrose 4-phosphate and phosphoenolpyruvate: step 6/7. In terms of biological role, catalyzes the transfer of the enolpyruvyl moiety of phosphoenolpyruvate (PEP) to the 5-hydroxyl of shikimate-3-phosphate (S3P) to produce enolpyruvyl shikimate-3-phosphate and inorganic phosphate. In Salmonella agona (strain SL483), this protein is 3-phosphoshikimate 1-carboxyvinyltransferase.